Consider the following 343-residue polypeptide: N-malonyltransferase FDB2 (343 aa).

The Acyl-thioester intermediate role is filled by Cys-107. The active-site Proton acceptor is the His-155. Asp-170 is an active-site residue.

The protein belongs to the arylamine N-acetyltransferase family.

It functions in the pathway xenobiotic degradation. In terms of biological role, N-malonyltransferase; part of the Fusarium detoxification of benzoxazolinone cluster involved in the degradation of benzoxazolinones produced by the host plant. Maize, wheat, and rye produce the 2 benzoxazinone phytoanticipins 2,4-dihy-droxy-7-methoxy-1,4-benzoxazin-3-one (DIMBOA) and 2,4-dihydroxy-1,4-benzoxazin-3-one (DIBOA) that, due to their inherent instability once released, spontaneously degrade to the more stable corresponding benzoxazolinones, 6-methoxy-2-benzoxazolinone (MBOA) and 2-benzoxazolinone (BOA), respectively. The first step in the detoxification of benzoxazolinones involves the hydrolysis of the cyclic ester bond of benzoxazolinones by the gamma-lactamase FDB1 to aminophenols. FDB1 is able to convert BOA into 2-aminophenol (2-AP), as well as MBOA into 5-methoxy-2-aminophenol (2-AMP). The N-malonyltransferase FDB2 then metabolizes aminophenols via N-malonylation to non-toxic malonamic acids. FDB2 converts 2-AP into N-(2-hydroxyphenyl) malonamic acid (HPMA) and 2-AMP into N-(2-hydroxy-4-methoxyphenyl) malonamic acid (HMPMA). The cluster also contains 2 transcription factors (FDB3 and FPSE_08121), an aldo-keto reductase (FPSE_08125) that possibly associates with a ketone component of BOA and MBOA degradation, an esterase (FPSE_08126), an acyl-CoA transferase (FPSE_08120), a solute carrier protein (FPSE_08119) and a transmembrane transporter (FPSE_08127) proposed to shuttle metabolites of benzoxazolinone degradation. This Fusarium pseudograminearum (strain CS3096) (Wheat and barley crown-rot fungus) protein is N-malonyltransferase FDB2.